Here is a 168-residue protein sequence, read N- to C-terminus: Microtubule-associated protein Jupiter (168 aa).

The span at Met1–Ser14 shows a compositional bias: polar residues. A disordered region spans residues Met1 to Pro33. Ser24 carries the post-translational modification Phosphoserine. Thr35 carries the phosphothreonine modification. Basic and acidic residues predominate over residues Arg76–Leu87. 2 disordered regions span residues Arg76–Ile106 and Asn124–Lys168. Thr92 and Thr96 each carry phosphothreonine. Ser105, Ser133, and Ser144 each carry phosphoserine. Positions Ser131 to Ser144 are enriched in low complexity. The segment covering Thr145–Arg155 has biased composition (polar residues).

Belongs to the MAP Jupiter family.

The protein localises to the nucleus. The protein resides in the cytoplasm. It is found in the cytoskeleton. It localises to the spindle. Binds to all microtubule populations. This is Microtubule-associated protein Jupiter from Drosophila simulans (Fruit fly).